We begin with the raw amino-acid sequence, 225 residues long: Nuclear autoantigen Sp-100 (225 aa).

The region spanning 1–25 (SKNWKLSIRCGGYTLKVLMENKLLP) is the SAND domain. 2 consecutive DNA-binding regions (HMG box) follow at residues 26–102 (EPPS…KTYI) and 118–186 (PKRP…AAYR). A Nuclear localization signal motif is present at residues 66–83 (KKCSEMWKTIFAKEKGKF). Residues 157–224 (NNTAAADKQF…EDEQEEENEE (68 aa)) are a coiled coil. A disordered region spans residues 185–225 (YRAKGMPNSAKKRAVKAEKSKKKREEEEDEEDEQEEENEEE). Residues 194–206 (AKKRAVKAEKSKK) are compositionally biased toward basic residues. Over residues 210–225 (EEEDEEDEQEEENEEE) the composition is skewed to acidic residues.

In terms of assembly, homodimer. Interacts with members of the HP1 family of nonhistone chromosomal protein, such as CBX5 and CBX3 via the PxVxL motif. Interacts with ETS1; the interaction is direct and modulates ETS1 transcriptional activity. Interacts with the MRN complex which is composed of two heterodimers RAD50/MRE11 associated with a single NBN; recruits the complex to PML-related bodies. Interacts with HIPK2; positively regulates TP53-dependent transcription. Interacts with CASP8AP2; may negatively regulate CASP8AP2 export from the nucleus to the cytoplasm. Sumoylated. Sumoylated with SUMO1. Sumoylation depends on a functional nuclear localization signal but is not necessary for nuclear import or nuclear body targeting. Sumoylation may stabilize the interaction with CBX5. In terms of processing, phosphorylated.

The protein localises to the nucleus. It is found in the PML body. Its subcellular location is the nuclear body. It localises to the cytoplasm. In terms of biological role, together with PML, this tumor suppressor is a major constituent of the PML bodies, a subnuclear organelle involved in a large number of physiological processes including cell growth, differentiation and apoptosis. Functions as a transcriptional coactivator of ETS1 and ETS2. Under certain conditions, it may also act as a corepressor of ETS1 preventing its binding to DNA. Through the regulation of ETS1 it may play a role in angiogenesis, controlling endothelial cell motility and invasion. Through interaction with the MRN complex it may be involved in the regulation of telomeres lengthening. May also regulate TP53-mediated transcription and through CASP8AP2, regulate FAS-mediated apoptosis. May also play a role in infection by viruses through mechanisms that may involve chromatin and/or transcriptional regulation. This is Nuclear autoantigen Sp-100 (SP100) from Gorilla gorilla gorilla (Western lowland gorilla).